Here is a 122-residue protein sequence, read N- to C-terminus: Probable transcription factor PqrA (122 aa).

Residues 7–107 (NDILKWLETQ…NTTPAKFREN (101 aa)) enclose the HTH araC/xylS-type domain. 2 consecutive DNA-binding regions (H-T-H motif) follow at residues 26 to 47 (DTIA…KDFK) and 74 to 97 (ILDI…KKHF).

Functionally, upon expression in E.coli strain KY2563 confers resistance to antibiotics ofloxacin, ciprofloxacin, tetracycline, chloramphenicol, and ceftazidime (increases minimal inhibitory concentration by 8-32 times); also decreases expression of OmpF. In Proteus vulgaris, this protein is Probable transcription factor PqrA.